We begin with the raw amino-acid sequence, 35 residues long: DDCLGMFSSCDPNNDKCCPNRVCRVRDQWCKYKLW.

Cystine bridges form between C3–C18, C10–C23, and C17–C30.

This sequence belongs to the neurotoxin 10 (Hwtx-1) family. 59 (Tltx) subfamily. In terms of assembly, monomer. Expressed by the venom gland.

It is found in the secreted. Blocks Kv4.2/KCND2 voltage-gated potassium channels probably by shifting the voltage-dependence of channel activation to more depolarized potentials and by binding to the S3-S4 linker region of the voltage sensor domain. This is Kappa-theraphotoxin-Tb1c from Theraphosa blondi (Goliath birdeating spider).